Reading from the N-terminus, the 165-residue chain is Putative TRAP transporter small permease protein HI_0051 (165 aa).

4 helical membrane passes run 20 to 40, 51 to 71, 94 to 114, and 136 to 156; these read LEYL…FNSV, FSEE…IILV, IVLI…AYGA, and LYLA…FSMI.

This sequence belongs to the TRAP transporter small permease family.

It localises to the cell inner membrane. The sequence is that of Putative TRAP transporter small permease protein HI_0051 from Haemophilus influenzae (strain ATCC 51907 / DSM 11121 / KW20 / Rd).